A 107-amino-acid polypeptide reads, in one-letter code: Phosphoribosyl-ATP pyrophosphatase (107 aa).

It belongs to the PRA-PH family.

It localises to the cytoplasm. The catalysed reaction is 1-(5-phospho-beta-D-ribosyl)-ATP + H2O = 1-(5-phospho-beta-D-ribosyl)-5'-AMP + diphosphate + H(+). It functions in the pathway amino-acid biosynthesis; L-histidine biosynthesis; L-histidine from 5-phospho-alpha-D-ribose 1-diphosphate: step 2/9. This Neisseria meningitidis serogroup A / serotype 4A (strain DSM 15465 / Z2491) protein is Phosphoribosyl-ATP pyrophosphatase (hisE).